We begin with the raw amino-acid sequence, 107 residues long: RecQ-mediated genome instability protein 2 homolog (107 aa).

This sequence belongs to the RMI2 family. In terms of assembly, component of the RMI complex, containing at least top-3, rmh-1 and rmh-2. Component of the BTR double Holliday Junction dissolution complex composed of at least him-6, top-3, rmh-1 and rmif-2, which is involved in double strand break repair in the germline. Interacts with rmh-1; the interaction is direct and is required for mutual stability and localization at nuclear foci. As to expression, expressed in the germline.

Its subcellular location is the nucleus. Its function is as follows. Essential component of the RMI complex, a complex that plays an important role in the processing of homologous recombination intermediates. Component of the BTR double Holliday Junction dissolution complex, which is involved in homologous recombination during meiotic double strand break in the germline. Plays a role in double strand break repair by positively regulating the accumulation of rad-51 at double strand breaks. Stabilizes and positively regulates the localization of the BTR double Holliday Junction dissolution complex components rmh-1, him-6 and top-3 at nuclear foci during meiotic recombination. Positively regulates meiotic recombination, chiasma formation, and chromosome segregation in meiosis. Positively regulates DNA crossover formation and positioning on chromosome arms (away from the chromosome center) during homologous recombination. The sequence is that of RecQ-mediated genome instability protein 2 homolog from Caenorhabditis elegans.